The following is a 311-amino-acid chain: Methionyl-tRNA formyltransferase (311 aa).

111 to 114 is a (6S)-5,6,7,8-tetrahydrofolate binding site; it reads SLLP.

This sequence belongs to the Fmt family.

It carries out the reaction L-methionyl-tRNA(fMet) + (6R)-10-formyltetrahydrofolate = N-formyl-L-methionyl-tRNA(fMet) + (6S)-5,6,7,8-tetrahydrofolate + H(+). Its function is as follows. Attaches a formyl group to the free amino group of methionyl-tRNA(fMet). The formyl group appears to play a dual role in the initiator identity of N-formylmethionyl-tRNA by promoting its recognition by IF2 and preventing the misappropriation of this tRNA by the elongation apparatus. The protein is Methionyl-tRNA formyltransferase of Caldicellulosiruptor saccharolyticus (strain ATCC 43494 / DSM 8903 / Tp8T 6331).